We begin with the raw amino-acid sequence, 428 residues long: Serine--tRNA ligase (428 aa).

235 to 237 (TAE) lines the L-serine pocket. ATP is bound at residue 266–268 (RSE). Glu-289 lines the L-serine pocket. An ATP-binding site is contributed by 353 to 356 (EISS). Ser-389 is a binding site for L-serine.

The protein belongs to the class-II aminoacyl-tRNA synthetase family. Type-1 seryl-tRNA synthetase subfamily. In terms of assembly, homodimer. The tRNA molecule binds across the dimer.

Its subcellular location is the cytoplasm. The enzyme catalyses tRNA(Ser) + L-serine + ATP = L-seryl-tRNA(Ser) + AMP + diphosphate + H(+). The catalysed reaction is tRNA(Sec) + L-serine + ATP = L-seryl-tRNA(Sec) + AMP + diphosphate + H(+). It functions in the pathway aminoacyl-tRNA biosynthesis; selenocysteinyl-tRNA(Sec) biosynthesis; L-seryl-tRNA(Sec) from L-serine and tRNA(Sec): step 1/1. In terms of biological role, catalyzes the attachment of serine to tRNA(Ser). Is also able to aminoacylate tRNA(Sec) with serine, to form the misacylated tRNA L-seryl-tRNA(Sec), which will be further converted into selenocysteinyl-tRNA(Sec). This is Serine--tRNA ligase from Pasteurella multocida (strain Pm70).